A 447-amino-acid polypeptide reads, in one-letter code: Acidic leucine-rich nuclear phosphoprotein 32-related protein (447 aa).

3 LRR repeats span residues Asn49–Gly70, Asn71–Val90, and Ser96–Ala117. One can recognise an LRRCT domain in the interval Cys129–Glu167. The tract at residues Asp155–Arg447 is disordered. Acidic residues-rich tracts occupy residues Glu163–Gly194 and Val215–Glu231. The segment covering Gln232–Arg242 has biased composition (polar residues). 5 stretches are compositionally biased toward acidic residues: residues Val256–Val277, Glu284–Asp309, Gly336–Gly374, Pro397–Pro415, and Asp433–Arg447.

The protein belongs to the ANP32 family.

The polypeptide is Acidic leucine-rich nuclear phosphoprotein 32-related protein (Arabidopsis thaliana (Mouse-ear cress)).